The sequence spans 848 residues: Leucine--tRNA ligase (848 aa).

The 'HIGH' region motif lies at 41 to 51 (PYPSGRIHMGH). The short motif at 619–623 (KMSKS) is the 'KMSKS' region element. An ATP-binding site is contributed by Lys622.

This sequence belongs to the class-I aminoacyl-tRNA synthetase family.

Its subcellular location is the cytoplasm. The catalysed reaction is tRNA(Leu) + L-leucine + ATP = L-leucyl-tRNA(Leu) + AMP + diphosphate. This chain is Leucine--tRNA ligase, found in Roseobacter denitrificans (strain ATCC 33942 / OCh 114) (Erythrobacter sp. (strain OCh 114)).